A 272-amino-acid polypeptide reads, in one-letter code: Shikimate dehydrogenase (NADP(+)) (272 aa).

Residues serine 16–serine 18 and threonine 63 contribute to the shikimate site. The active-site Proton acceptor is lysine 67. Glutamate 79 serves as a coordination point for NADP(+). The shikimate site is built by asparagine 88 and aspartate 103. NADP(+) is bound by residues glycine 127 to alanine 131, asparagine 151 to arginine 156, and isoleucine 212. Tyrosine 214 is a binding site for shikimate. Position 235 (glycine 235) interacts with NADP(+).

The protein belongs to the shikimate dehydrogenase family. As to quaternary structure, homodimer.

It catalyses the reaction shikimate + NADP(+) = 3-dehydroshikimate + NADPH + H(+). Its pathway is metabolic intermediate biosynthesis; chorismate biosynthesis; chorismate from D-erythrose 4-phosphate and phosphoenolpyruvate: step 4/7. Functionally, involved in the biosynthesis of the chorismate, which leads to the biosynthesis of aromatic amino acids. Catalyzes the reversible NADPH linked reduction of 3-dehydroshikimate (DHSA) to yield shikimate (SA). In Staphylococcus epidermidis (strain ATCC 12228 / FDA PCI 1200), this protein is Shikimate dehydrogenase (NADP(+)).